The chain runs to 134 residues: Small ribosomal subunit protein uS9 (134 aa).

Positions 114-134 (QKEAKNFGGPGARSKYQKSYR) are disordered.

This sequence belongs to the universal ribosomal protein uS9 family.

The chain is Small ribosomal subunit protein uS9 from Methanosarcina mazei (strain ATCC BAA-159 / DSM 3647 / Goe1 / Go1 / JCM 11833 / OCM 88) (Methanosarcina frisia).